A 206-amino-acid chain; its full sequence is Small ribosomal subunit protein uS4 (206 aa).

Positions 15–46 are disordered; sequence MGENIWGRPKSPVNKREYGPGQHGQRRKNKLS. Residues 94-157 form the S4 RNA-binding domain; it reads RRLDAIVYRA…RQLAIVLEAT (64 aa).

The protein belongs to the universal ribosomal protein uS4 family. Part of the 30S ribosomal subunit. Contacts protein S5. The interaction surface between S4 and S5 is involved in control of translational fidelity.

Functionally, one of the primary rRNA binding proteins, it binds directly to 16S rRNA where it nucleates assembly of the body of the 30S subunit. Its function is as follows. With S5 and S12 plays an important role in translational accuracy. The protein is Small ribosomal subunit protein uS4 of Cereibacter sphaeroides (strain ATCC 17025 / ATH 2.4.3) (Rhodobacter sphaeroides).